Reading from the N-terminus, the 457-residue chain is Methylenetetrahydrofolate--tRNA-(uracil-5-)-methyltransferase TrmFO (457 aa).

7–12 (GAGLAG) lines the FAD pocket. A disordered region spans residues 38 to 58 (FTSRQDEKTGTHDVRNATQTR). Residues 40-52 (SRQDEKTGTHDVR) show a composition bias toward basic and acidic residues.

This sequence belongs to the MnmG family. TrmFO subfamily. It depends on FAD as a cofactor.

The protein resides in the cytoplasm. It carries out the reaction uridine(54) in tRNA + (6R)-5,10-methylene-5,6,7,8-tetrahydrofolate + NADH + H(+) = 5-methyluridine(54) in tRNA + (6S)-5,6,7,8-tetrahydrofolate + NAD(+). It catalyses the reaction uridine(54) in tRNA + (6R)-5,10-methylene-5,6,7,8-tetrahydrofolate + NADPH + H(+) = 5-methyluridine(54) in tRNA + (6S)-5,6,7,8-tetrahydrofolate + NADP(+). Catalyzes the folate-dependent formation of 5-methyl-uridine at position 54 (M-5-U54) in all tRNAs. In Hydrogenobaculum sp. (strain Y04AAS1), this protein is Methylenetetrahydrofolate--tRNA-(uracil-5-)-methyltransferase TrmFO.